Reading from the N-terminus, the 763-residue chain is MVTTHNLGFPRIGAHRELKFALEKYWKGESSRAELKAVGAQLRARHWQDQARLDFSPVGDFAFYDQVLDMSFTLGNLPERVRGFHGDALDNAFRVARGRSAHGADDHSACCGGVAAGEMTKWFDTNYHYIVPEFDTNTQFSLDPSRLLEQIKEAHAQGVKAKPVIIGPVTYLWLGKAKDGSDKLTLLPRLLPVYAALLDYFTAQGIDWVQIDEPVLVTELDARWRDAFVPAYDALAARRVRVLLATYFGQLKENLELACQLPVDGLHIDAIHARDEVAQVAAQVPETAVLSVGVINGRNVWKTDLNAALAWLEPLHATLGDRLWIAPSCSLLHSPVDLNSERKLDADIRSWLAFALQKLDELTLLASALNNGRACVEAELLANAKAIESRRASPRVHNAAVKAALARIDASLGQRANAYPARAAKQAAALALPAFPTTTIGSFPQTADIRRARSQFKAGELDYAGYKLAMEREITRAVKEQETLGLDVLVHGEAERNDMVEYFGEQLDGYVFSQFGWVQSYGSRCVKPPILFGDISRPKAMTVEWICYAQAQTAKPMKGMLTGPVTILNWSFVRDDQPRSVSCRQLALAIREEVLDLEKAGVRVIQIDEAALREGLPLRRSQWNEYLQWAVESFRIAANGVQDETQIHTHMCYSEFNDIIASIAEMDADVITIETSRSDMELLDAFDDFHYPNQIGPGVYDIHSPNIPDQAHVVDLMKKAAERIPAERLWVNPDCGLKTRAWEEVIPALKNMVAAARTLRQAV.

5-methyltetrahydropteroyltri-L-glutamate is bound by residues 16–19 (RELK) and K121. L-homocysteine is bound by residues 440–442 (IGS) and E493. L-methionine-binding positions include 440 to 442 (IGS) and E493. Residues 524-525 (RC) and W570 each bind 5-methyltetrahydropteroyltri-L-glutamate. D608 provides a ligand contact to L-homocysteine. D608 contacts L-methionine. Residue E614 participates in 5-methyltetrahydropteroyltri-L-glutamate binding. 3 residues coordinate Zn(2+): H650, C652, and E674. H703 functions as the Proton donor in the catalytic mechanism. Residue C735 coordinates Zn(2+).

It belongs to the vitamin-B12 independent methionine synthase family. It depends on Zn(2+) as a cofactor.

It carries out the reaction 5-methyltetrahydropteroyltri-L-glutamate + L-homocysteine = tetrahydropteroyltri-L-glutamate + L-methionine. It functions in the pathway amino-acid biosynthesis; L-methionine biosynthesis via de novo pathway; L-methionine from L-homocysteine (MetE route): step 1/1. In terms of biological role, catalyzes the transfer of a methyl group from 5-methyltetrahydrofolate to homocysteine resulting in methionine formation. The chain is 5-methyltetrahydropteroyltriglutamate--homocysteine methyltransferase from Paraburkholderia phymatum (strain DSM 17167 / CIP 108236 / LMG 21445 / STM815) (Burkholderia phymatum).